Here is a 235-residue protein sequence, read N- to C-terminus: Glycerol-3-phosphate acyltransferase (235 aa).

6 consecutive transmembrane segments (helical) span residues 4 to 24 (LLAI…LVAG), 56 to 76 (VVTL…VAFF), 94 to 114 (LLAG…GFKG), 122 to 142 (AGML…IFLL), 152 to 172 (VASM…KYIF), and 191 to 211 (FHDS…LAIL).

Belongs to the PlsY family. As to quaternary structure, probably interacts with PlsX.

It localises to the cell inner membrane. It carries out the reaction an acyl phosphate + sn-glycerol 3-phosphate = a 1-acyl-sn-glycero-3-phosphate + phosphate. It participates in lipid metabolism; phospholipid metabolism. Its function is as follows. Catalyzes the transfer of an acyl group from acyl-phosphate (acyl-PO(4)) to glycerol-3-phosphate (G3P) to form lysophosphatidic acid (LPA). This enzyme utilizes acyl-phosphate as fatty acyl donor, but not acyl-CoA or acyl-ACP. This is Glycerol-3-phosphate acyltransferase from Pelodictyon phaeoclathratiforme (strain DSM 5477 / BU-1).